A 295-amino-acid polypeptide reads, in one-letter code: Glycine--tRNA ligase alpha subunit (295 aa).

The protein belongs to the class-II aminoacyl-tRNA synthetase family. Tetramer of two alpha and two beta subunits.

Its subcellular location is the cytoplasm. The catalysed reaction is tRNA(Gly) + glycine + ATP = glycyl-tRNA(Gly) + AMP + diphosphate. This Prochlorococcus marinus (strain MIT 9215) protein is Glycine--tRNA ligase alpha subunit.